A 458-amino-acid chain; its full sequence is Bone morphogenetic protein 3 (458 aa).

The signal sequence occupies residues 1–23 (MAECRPWLVLWVGCCGCLCLALG). Positions 24 to 348 (ELLNDGLLAV…EQTLKKARRK (325 aa)) are excised as a propeptide. Asn-107 carries N-linked (GlcNAc...) asparagine glycosylation. 2 disordered regions span residues 244 to 275 (DSVV…KKRS) and 303 to 335 (ERKP…SQTL). A compositionally biased stretch (basic residues) spans 320–329 (NKKKLRKGSR). 3 disulfides stabilise this stretch: Cys-356–Cys-423, Cys-385–Cys-455, and Cys-389–Cys-457. The N-linked (GlcNAc...) asparagine glycan is linked to Asn-449.

It belongs to the TGF-beta family. As to quaternary structure, homodimer. Can form heterodimers with ADMP, BMP-2-I and/or BMP-2-II, and DERRIERE.

It localises to the secreted. Its function is as follows. Dorsalizing factor. Antagonizes mesoderm formation by ventralizing BMPs. The protein is Bone morphogenetic protein 3 (bmp3) of Xenopus laevis (African clawed frog).